A 967-amino-acid chain; its full sequence is Leucine--tRNA ligase (967 aa).

Residues 43–53 (PYLSGHLHVGH) carry the 'HIGH' region motif. A 'KMSKS' region motif is present at residues 650 to 654 (KMSKS). Position 653 (Lys653) interacts with ATP.

This sequence belongs to the class-I aminoacyl-tRNA synthetase family.

It is found in the cytoplasm. The catalysed reaction is tRNA(Leu) + L-leucine + ATP = L-leucyl-tRNA(Leu) + AMP + diphosphate. The protein is Leucine--tRNA ligase of Pyrococcus horikoshii (strain ATCC 700860 / DSM 12428 / JCM 9974 / NBRC 100139 / OT-3).